The chain runs to 931 residues: MSPCGYYSKWRNRDRPEYRRNLRFRRFFSSIHPNAAAGSGFNGPGVFITSVTGVWLCFLCIFSMFVTAVVSVSPSSFYESLQVEPTQSEDITRSAHLGDGDEIREAIHKSQDAETKPTFYVCPPPTGSTIVRLEPTRTCPDYHLGKNFTEGIAVVYKENIAAYKFKATVYYKDVIVSTAWAGSSYTQITNRYADRVPIPVSEITDTIDKFGKCSSKATYVRNNHKVEAFNEDKNPQDMPLIASKYNSVGSKAWHTTNDTYMVAGTPGTYRTGTSVNCIIEEVEARSIFPYDSFGLSTGDIIYMSPFFGLRDGAYREHSNYAMDRFHQFEGYRQRDLDTRALLEPAARNFLVTPHLTVGWNWKPKRTEVCSLVKWREVEDVVRDEYAHNFRFTMKTLSTTFISETNEFNLNQIHLSQCVKEEARAIINRIYTTRYNSSHVRTGDIQTYLARGGFVVVFQPLLSNSLARLYLQELVRENTNHSPQKHPTRNTRSRRSVPVELRANRTITTTSSVEFAMLQFTYDHIQEHVNEMLARISSSWCQLQNRERALWSGLFPINPSALASTILDQRVKARILGDVISVSNCPELGSDTRIILQNSMRVSGSTTRCYSRPLISIVSLNGSGTVEGQLGTDNELIMSRDLLEPCVANHKRYFLFGHHYVYYEDYRYVREIAVHDVGMISTYVDLNLTLLKDREFMPLQVYTRDELRDTGLLDYSEIQRRNQMHSLRFYDIDKVVQYDSGTAIMQGMAQFFQGLGTAGQAVGHVVLGATGALLSTVHGFTTFLSNPFGALAVGLLVLAGLVAAFFAYRYVLKLKTSPMKALYPLTTKGLKQLPEGMDPFAEKPNATDTPIEEIGDSQNTEPSVNSGFDPDKFREAQEMIKYMTLVSAAERQESKARKKNKTSALLTSRLTGLALRNRRGYSRVRTENVTGV.

Positions 1 to 71 (MSPCGYYSKW…FSMFVTAVVS (71 aa)) are cleaved as a signal peptide. Over 72–786 (VSPSSFYESL…HGFTTFLSNP (715 aa)) the chain is Virion surface. 5 disulfides stabilise this stretch: Cys122–Cys584, Cys139–Cys540, Cys213–Cys277, Cys369–Cys417, and Cys608–Cys645. Residue Asn147 is glycosylated (N-linked (GlcNAc...) asparagine; by host). Residues 179 to 185 (AWAGSSY) are involved in fusion and/or binding to host membrane. N-linked (GlcNAc...) asparagine; by host glycosylation is present at Asn257. The interval 264–271 (GTPGTYRT) is involved in fusion and/or binding to host membrane. Residues Asn435, Asn503, Asn620, and Asn686 are each glycosylated (N-linked (GlcNAc...) asparagine; by host). Hydrophobic membrane proximal region stretches follow at residues 731 to 784 (IDKV…TFLS) and 764 to 784 (VVLG…TFLS). A helical transmembrane segment spans residues 787 to 807 (FGALAVGLLVLAGLVAAFFAY). At 808-931 (RYVLKLKTSP…RVRTENVTGV (124 aa)) the chain is on the intravirion side. The short motif at 881 to 884 (YMTL) is the Golgi targeting element. The Di-leucine internalization motif signature appears at 904–906 (LLT). The Internalization motif signature appears at 920 to 923 (YSRV).

It belongs to the herpesviridae glycoprotein B family. As to quaternary structure, homotrimer; disulfide-linked. Binds to heparan sulfate proteoglycans. Interacts with gH/gL heterodimer. Interacts with gE. A proteolytic cleavage by host furin generates two subunits that remain linked by disulfide bonds.

The protein localises to the virion membrane. Its subcellular location is the host cell membrane. It localises to the host endosome membrane. It is found in the host Golgi apparatus membrane. In terms of biological role, envelope glycoprotein that forms spikes at the surface of virion envelope. Essential for the initial attachment to heparan sulfate moieties of the host cell surface proteoglycans. Involved in fusion of viral and cellular membranes leading to virus entry into the host cell. Following initial binding to its host receptors, membrane fusion is mediated by the fusion machinery composed at least of gB and the heterodimer gH/gL. May be involved in the fusion between the virion envelope and the outer nuclear membrane during virion egress. This is Envelope glycoprotein B from Varicella-zoster virus (strain Dumas) (HHV-3).